The primary structure comprises 276 residues: Large ribosomal subunit protein uL2 (276 aa).

The disordered stretch occupies residues 224–265 (GTAMNPIDHPHGGGEGKNFGKHPVSPWGVQTKGKRTRSNKRT).

The protein belongs to the universal ribosomal protein uL2 family. As to quaternary structure, part of the 50S ribosomal subunit. Forms a bridge to the 30S subunit in the 70S ribosome.

Functionally, one of the primary rRNA binding proteins. Required for association of the 30S and 50S subunits to form the 70S ribosome, for tRNA binding and peptide bond formation. It has been suggested to have peptidyltransferase activity; this is somewhat controversial. Makes several contacts with the 16S rRNA in the 70S ribosome. The protein is Large ribosomal subunit protein uL2 of Blochmanniella floridana.